We begin with the raw amino-acid sequence, 825 residues long: NT-3 growth factor receptor (825 aa).

The first 31 residues, methionine 1–alanine 31, serve as a signal peptide directing secretion. Intrachain disulfides connect cysteine 32–cysteine 38 and cysteine 36–cysteine 45. Topologically, residues cysteine 32 to threonine 429 are extracellular. N-linked (GlcNAc...) asparagine glycosylation is found at asparagine 68, asparagine 72, and asparagine 79. 2 LRR repeats span residues glycine 104–lysine 125 and histidine 128–threonine 149. 2 N-linked (GlcNAc...) asparagine glycosylation sites follow: asparagine 133 and asparagine 163. Positions asparagine 160–leucine 209 constitute an LRRCT domain. Intrachain disulfides connect cysteine 164–cysteine 189 and cysteine 166–cysteine 207. Residues asparagine 203, asparagine 218, asparagine 232, asparagine 259, asparagine 267, asparagine 272, and asparagine 294 are each glycosylated (N-linked (GlcNAc...) asparagine). Ig-like C2-type domains follow at residues proline 210 to threonine 300 and serine 309 to glutamate 382. Cysteine 231 and cysteine 284 are oxidised to a cystine. An intrachain disulfide couples cysteine 320 to cysteine 362. Residues asparagine 375 and asparagine 388 are each glycosylated (N-linked (GlcNAc...) asparagine). A helical membrane pass occupies residues phenylalanine 430–isoleucine 453. Residues asparagine 454–glycine 825 are Cytoplasmic-facing. A Phosphotyrosine; by autocatalysis modification is found at tyrosine 516. A Protein kinase domain is found at isoleucine 538–glycine 814. ATP-binding positions include leucine 544–valine 552 and lysine 572. Catalysis depends on aspartate 679, which acts as the Proton acceptor. Phosphotyrosine; by autocatalysis occurs at positions 705, 709, 710, and 820.

This sequence belongs to the protein kinase superfamily. Tyr protein kinase family. Insulin receptor subfamily. As to quaternary structure, exists in a dynamic equilibrium between monomeric (low affinity) and dimeric (high affinity) structures. Binds SH2B2. Interacts with SQSTM1 and KIDINS220. Interacts with PTPRS. Interacts with MAPK8IP3/JIP3. Post-translationally, ligand-mediated auto-phosphorylation. In terms of tissue distribution, preferentially in the brain, low levels in the ovaries.

It localises to the membrane. The catalysed reaction is L-tyrosyl-[protein] + ATP = O-phospho-L-tyrosyl-[protein] + ADP + H(+). Functionally, receptor tyrosine kinase involved in nervous system and probably heart development. Upon binding of its ligand NTF3/neurotrophin-3, NTRK3 autophosphorylates and activates different signaling pathways, including the phosphatidylinositol 3-kinase/AKT and the MAPK pathways, that control cell survival and differentiation. This chain is NT-3 growth factor receptor (NTRK3), found in Sus scrofa (Pig).